A 342-amino-acid polypeptide reads, in one-letter code: Guanine nucleotide-binding protein alpha-9 subunit (342 aa).

The N-myristoyl glycine moiety is linked to residue glycine 2. A lipid anchor (S-palmitoyl cysteine) is attached at cysteine 3. Residues 28–342 (REIKLLLLGS…IIQSILKLHY (315 aa)) form the G-alpha domain. The tract at residues 31 to 44 (KLLLLGSGDSGKST) is G1 motif. Residues 36-43 (GSGDSGKS), 167-173 (LRCRQRT), 192-196 (DVGGQ), 261-264 (NKND), and alanine 316 contribute to the GTP site. Serine 43 and threonine 173 together coordinate Mg(2+). Residues 165 to 173 (DVLRCRQRT) are G2 motif. The tract at residues 188–197 (FRLIDVGGQK) is G3 motif. The interval 257-264 (VLFLNKND) is G4 motif. The G5 motif stretch occupies residues 314 to 319 (TTATDT).

Belongs to the G-alpha family. G proteins are composed of 3 units; alpha, beta and gamma. The alpha chain contains the guanine nucleotide binding site.

In terms of biological role, guanine nucleotide-binding proteins (G proteins) are involved as modulators or transducers in various transmembrane signaling systems. G alpha-9 antagonizes broad chemotactic response. It functions rapidly following receptor stimulation to negatively regulate PI3K/PTEN, adenylyl cyclase, and guanylyl cyclase pathways. This chain is Guanine nucleotide-binding protein alpha-9 subunit (gpaI), found in Dictyostelium discoideum (Social amoeba).